Here is a 397-residue protein sequence, read N- to C-terminus: MPQLSGGGGGGDPELCATDEMIPFKDEGDPQKEKIFAEISHPEEEGDLADIKSSLVNESEIIPASNGHEVVGQTQSSQEPYHDKAREHPDDGKHPDGGLYNKGPSYSSYSGYIMMPNMNSDPYMSNGSLSPPIPRTSNKVPVVQPSHAVHPLTPLITYSDEHFSPGSHPSHIPSEVNPKQGMSRHPPAPEMPTFYPLSPGGVGQITPPLGWQGQPVYPITGGFRQAYPSSLSGDTSMSRFSHHMIPGPPGPHTTGIPHPAIVTPQVKQEHPHTDSDLMHVKPEHEQRKEQEPKRPHIKKPLNAFMLYMKEMRANVVAECTLKESAAINQILGRRWHALSREEQAKYYELARKERQLHMQLYPGWSARDNYGKKKKRKREKLQESTSGTGPRMTAAYI.

The CTNNB1-binding stretch occupies residues 1–60; the sequence is MPQLSGGGGGGDPELCATDEMIPFKDEGDPQKEKIFAEISHPEEEGDLADIKSSLVNESE. Residue Lys25 forms a Glycyl lysine isopeptide (Lys-Gly) (interchain with G-Cter in SUMO) linkage. Positions 38 to 102 are disordered; it reads EISHPEEEGD…KHPDGGLYNK (65 aa). Residues 80–96 are compositionally biased toward basic and acidic residues; that stretch reads PYHDKAREHPDDGKHPD. Ser130 bears the Phosphoserine mark. Position 153 is a phosphothreonine; by NLK (Thr153). The residue at position 164 (Ser164) is a Phosphoserine; by NLK. Disordered stretches follow at residues 164 to 190 and 266 to 296; these read SPGS…PAPE and VKQE…KRPH. Lys267 participates in a covalent cross-link: Glycyl lysine isopeptide (Lys-Gly) (interchain with G-Cter in SUMO). A compositionally biased stretch (basic and acidic residues) spans 267–294; that stretch reads KQEHPHTDSDLMHVKPEHEQRKEQEPKR. The segment at residues 297–365 is a DNA-binding region (HMG box); it reads IKKPLNAFML…LHMQLYPGWS (69 aa). Positions 367-397 are disordered; it reads RDNYGKKKKRKREKLQESTSGTGPRMTAAYI.

This sequence belongs to the TCF/LEF family. In terms of assembly, binds the armadillo repeat of CTNNB1 and forms a stable complex. Interacts with TLE1, PIASG, ALYREF/THOC4, EP300, MDFI and MDFIC. Interacts with DAZAP2. Post-translationally, phosphorylated at Thr-153 and/or Ser-164 by NLK. Phosphorylation by NLK at these sites represses LEF1-mediated transcriptional activation of target genes of the canonical Wnt signaling pathway.

The protein resides in the nucleus. Transcription factor that binds DNA in a sequence-specific manner. Participates in the Wnt signaling pathway. Activates transcription of target genes in the presence of CTNNB1 and EP300. PIASG antagonizes both Wnt-dependent and Wnt-independent activation by LEF1. TLE1, TLE2, TLE3 and TLE4 repress transactivation mediated by LEF1 and CTNNB1. Regulates T-cell receptor alpha enhancer function. Required for IL17A expressing gamma-delta T-cell maturation and development, via binding to regulator loci of BLK to modulate expression. Acts as a positive regulator of odontoblast differentiation during mesenchymal tooth germ formation, expression is repressed during the bell stage by MSX1-mediated inhibition of CTNNB1 signaling. May play a role in hair cell differentiation and follicle morphogenesis. The chain is Lymphoid enhancer-binding factor 1 from Rattus norvegicus (Rat).